Reading from the N-terminus, the 520-residue chain is Cobalt-zinc-cadmium resistance protein CzcB (520 aa).

A helical membrane pass occupies residues 9–29 (AAIAAIVLVGGVATGGVLLSG). A disordered region spans residues 28–85 (SGRSAPEEQGGHSESKGHGDTEHHGKQAAEADHKDDKSHGDGEHHEVKKGPNGGALFS). The segment covering 32–76 (APEEQGGHSESKGHGDTEHHGKQAAEADHKDDKSHGDGEHHEVKK) has biased composition (basic and acidic residues). Residues 286–320 (EQKISAEQDYLSARNALQEAQISVQNAQQKLTAIG) are a coiled coil.

The protein belongs to the membrane fusion protein (MFP) (TC 8.A.1) family.

It is found in the cell inner membrane. Its function is as follows. CzcA and CzcB together would act in zinc efflux nearly as effectively as the complete czc efflux system (CzcABC). The CzcB protein is thought to funnel zinc cations to the CzcA transport protein. The chain is Cobalt-zinc-cadmium resistance protein CzcB (czcB) from Cupriavidus metallidurans (strain ATCC 43123 / DSM 2839 / NBRC 102507 / CH34) (Ralstonia metallidurans).